Consider the following 30-residue polypeptide: GLPVCGESCFGGTCNTPGCACDPWPVCTRD.

The cyclopeptide (Gly-Asp) cross-link spans 1 to 30 (GLPVCGESCFGGTCNTPGCACDPWPVCTRD). 3 disulfide bridges follow: Cys-5–Cys-19, Cys-9–Cys-21, and Cys-14–Cys-27.

In terms of processing, this is a cyclic peptide.

In terms of biological role, probably participates in a plant defense mechanism. This chain is Kalata-B14, found in Oldenlandia affinis.